A 721-amino-acid polypeptide reads, in one-letter code: Long-chain-fatty-acid--CoA ligase ACSBG1 (721 aa).

Residues 1-64 (MPRGSEAGYC…SHGLELSAPE (64 aa)) form a disordered region. The segment covering 26-52 (QQGASLGTSQDNSQTSSLIDGQTLSKE) has biased composition (polar residues). 4 positions are modified to phosphoserine: S34, S50, S53, and S70. ATP-binding positions include 279-287 (TSGTTGNPK), 469-474 (AGYGLS), D547, and R562. Residue Y655 is modified to Phosphotyrosine. K698 is an ATP binding site.

The protein belongs to the ATP-dependent AMP-binding enzyme family. Bubblegum subfamily. Mainly expressed in brain. Also expressed in adrenal gland and testis. In brain, it is present in cerebral cortical and cerebellar neurons and in steroidogenic cells of the adrenal gland, testis and ovary (at protein level).

The protein resides in the cytoplasm. It is found in the cytoplasmic vesicle. The protein localises to the microsome. Its subcellular location is the endoplasmic reticulum. It localises to the cell membrane. It carries out the reaction a long-chain fatty acid + ATP + CoA = a long-chain fatty acyl-CoA + AMP + diphosphate. The catalysed reaction is (E)-hexadec-2-enoate + ATP + CoA = (2E)-hexadecenoyl-CoA + AMP + diphosphate. The enzyme catalyses hexadecanoate + ATP + CoA = hexadecanoyl-CoA + AMP + diphosphate. Functionally, catalyzes the conversion of fatty acids such as long-chain and very long-chain fatty acids to their active form acyl-CoAs for both synthesis of cellular lipids, and degradation via beta-oxidation. Can activate diverse saturated, monosaturated and polyunsaturated fatty acids. The polypeptide is Long-chain-fatty-acid--CoA ligase ACSBG1 (Mus musculus (Mouse)).